A 288-amino-acid chain; its full sequence is MTKAQLFGKPLADDVTRGVRAALKEWAGAEPGFQPHLVSVLASEDEASRVYVHSKARQAERLGVRFTARDLGADAKQDELHAVLQALSADADVHGVVLELPLAPGLDADAALRHIAPCKDVEGLTPANLALIAAGREAEALLPPTPRSVRFLLREVLGDDLRGRRVAVIGPGRTVGRPLTFMLNNRGVTVTLCNECTRDLRDVLAPQDAVVVAVGHAGLLRPEQVQPHHVVIDAGINVTPGGVVGDAVPDLPVRAQTPVPGGVGPLTSALMYQNLVRAVKLQRGERVE.

Residues 170-172 (GPG) and Ile-236 each bind NADP(+).

The protein belongs to the tetrahydrofolate dehydrogenase/cyclohydrolase family. As to quaternary structure, homodimer.

It catalyses the reaction (6R)-5,10-methylene-5,6,7,8-tetrahydrofolate + NADP(+) = (6R)-5,10-methenyltetrahydrofolate + NADPH. It carries out the reaction (6R)-5,10-methenyltetrahydrofolate + H2O = (6R)-10-formyltetrahydrofolate + H(+). Its pathway is one-carbon metabolism; tetrahydrofolate interconversion. Functionally, catalyzes the oxidation of 5,10-methylenetetrahydrofolate to 5,10-methenyltetrahydrofolate and then the hydrolysis of 5,10-methenyltetrahydrofolate to 10-formyltetrahydrofolate. This chain is Bifunctional protein FolD 1, found in Deinococcus geothermalis (strain DSM 11300 / CIP 105573 / AG-3a).